Reading from the N-terminus, the 237-residue chain is Octanoyltransferase (237 aa).

One can recognise a BPL/LPL catalytic domain in the interval 27-210 (SGGDDILLLL…EFYHIFQPAG (184 aa)). Substrate-binding positions include 72–79 (RGGNVTCH), 139–141 (SLG), and 152–154 (GMA). The active-site Acyl-thioester intermediate is Cys-170.

Belongs to the LipB family.

The protein resides in the cytoplasm. The catalysed reaction is octanoyl-[ACP] + L-lysyl-[protein] = N(6)-octanoyl-L-lysyl-[protein] + holo-[ACP] + H(+). Its pathway is protein modification; protein lipoylation via endogenous pathway; protein N(6)-(lipoyl)lysine from octanoyl-[acyl-carrier-protein]: step 1/2. Functionally, catalyzes the transfer of endogenously produced octanoic acid from octanoyl-acyl-carrier-protein onto the lipoyl domains of lipoate-dependent enzymes. Lipoyl-ACP can also act as a substrate although octanoyl-ACP is likely to be the physiological substrate. This is Octanoyltransferase from Desulfovibrio desulfuricans (strain ATCC 27774 / DSM 6949 / MB).